A 239-amino-acid chain; its full sequence is Ribosomal RNA large subunit methyltransferase E (239 aa).

Residues Gly88, Trp90, Asp111, Asp127, and Asp151 each coordinate S-adenosyl-L-methionine. The Proton acceptor role is filled by Lys191.

It belongs to the class I-like SAM-binding methyltransferase superfamily. RNA methyltransferase RlmE family.

The protein resides in the cytoplasm. The catalysed reaction is uridine(2552) in 23S rRNA + S-adenosyl-L-methionine = 2'-O-methyluridine(2552) in 23S rRNA + S-adenosyl-L-homocysteine + H(+). Functionally, specifically methylates the uridine in position 2552 of 23S rRNA at the 2'-O position of the ribose in the fully assembled 50S ribosomal subunit. In Bartonella bacilliformis (strain ATCC 35685 / KC583 / Herrer 020/F12,63), this protein is Ribosomal RNA large subunit methyltransferase E.